The following is a 188-amino-acid chain: dTTP/UTP pyrophosphatase (188 aa).

The active-site Proton acceptor is aspartate 70.

The protein belongs to the Maf family. YhdE subfamily. It depends on a divalent metal cation as a cofactor.

It localises to the cytoplasm. The catalysed reaction is dTTP + H2O = dTMP + diphosphate + H(+). The enzyme catalyses UTP + H2O = UMP + diphosphate + H(+). Nucleoside triphosphate pyrophosphatase that hydrolyzes dTTP and UTP. May have a dual role in cell division arrest and in preventing the incorporation of modified nucleotides into cellular nucleic acids. The polypeptide is dTTP/UTP pyrophosphatase (Clostridium beijerinckii (strain ATCC 51743 / NCIMB 8052) (Clostridium acetobutylicum)).